The following is a 147-amino-acid chain: Hemoglobin subunit gamma (147 aa).

The Globin domain occupies 3–147 (YFTAEEKAAI…VASALARKYH (145 aa)). Residues His64 and His93 each contribute to the heme b site.

This sequence belongs to the globin family. In terms of assembly, heterotetramer of two alpha chains and two gamma chains in fetal hemoglobin (Hb F). In terms of tissue distribution, red blood cells.

In terms of biological role, gamma chains make up the fetal hemoglobin F, in combination with alpha chains. The chain is Hemoglobin subunit gamma (HBG) from Dugong dugon (Dugong).